A 260-amino-acid chain; its full sequence is ATP synthase subunit a (260 aa).

7 helical membrane-spanning segments follow: residues 29 to 49 (FSFT…LLLI), 95 to 115 (FFPC…QGMI), 124 to 144 (HFLI…IVGF), 151 to 171 (FFSF…LVLL), 191 to 211 (MMAG…MLCM), 213 to 233 (EIFY…LTGL), and 237 to 257 (VAIL…NDAI).

This sequence belongs to the ATPase A chain family. F-type ATPases have 2 components, CF(1) - the catalytic core - and CF(0) - the membrane proton channel. CF(1) has five subunits: alpha(3), beta(3), gamma(1), delta(1), epsilon(1). CF(0) has three main subunits: a, b and c.

It is found in the mitochondrion inner membrane. Its function is as follows. Mitochondrial membrane ATP synthase (F(1)F(0) ATP synthase or Complex V) produces ATP from ADP in the presence of a proton gradient across the membrane which is generated by electron transport complexes of the respiratory chain. F-type ATPases consist of two structural domains, F(1) - containing the extramembraneous catalytic core and F(0) - containing the membrane proton channel, linked together by a central stalk and a peripheral stalk. During catalysis, ATP synthesis in the catalytic domain of F(1) is coupled via a rotary mechanism of the central stalk subunits to proton translocation. Key component of the proton channel; it may play a direct role in the translocation of protons across the membrane. This Brassica napus (Rape) protein is ATP synthase subunit a (ATP6).